The chain runs to 286 residues: Shikimate dehydrogenase (NADP(+)) (286 aa).

Shikimate contacts are provided by residues 20 to 22 (SLS) and Ser67. Catalysis depends on Lys71, which acts as the Proton acceptor. Positions 92 and 107 each coordinate shikimate. NADP(+) contacts are provided by residues 131-135 (GGGGA) and Ala230. Residue Tyr232 coordinates shikimate. Gly253 lines the NADP(+) pocket.

It belongs to the shikimate dehydrogenase family. Homodimer.

The catalysed reaction is shikimate + NADP(+) = 3-dehydroshikimate + NADPH + H(+). Its pathway is metabolic intermediate biosynthesis; chorismate biosynthesis; chorismate from D-erythrose 4-phosphate and phosphoenolpyruvate: step 4/7. Functionally, involved in the biosynthesis of the chorismate, which leads to the biosynthesis of aromatic amino acids. Catalyzes the reversible NADPH linked reduction of 3-dehydroshikimate (DHSA) to yield shikimate (SA). The chain is Shikimate dehydrogenase (NADP(+)) from Lactococcus lactis subsp. cremoris (strain MG1363).